A 195-amino-acid polypeptide reads, in one-letter code: Molybdenum cofactor guanylyltransferase (195 aa).

GTP contacts are provided by residues 12 to 14, Lys-25, Asn-53, Asp-70, and Asp-100; that span reads LAG. Asp-100 contacts Mg(2+).

The protein belongs to the MobA family. Monomer. Requires Mg(2+) as cofactor.

The protein resides in the cytoplasm. It carries out the reaction Mo-molybdopterin + GTP + H(+) = Mo-molybdopterin guanine dinucleotide + diphosphate. In terms of biological role, transfers a GMP moiety from GTP to Mo-molybdopterin (Mo-MPT) cofactor (Moco or molybdenum cofactor) to form Mo-molybdopterin guanine dinucleotide (Mo-MGD) cofactor. In Vibrio vulnificus (strain YJ016), this protein is Molybdenum cofactor guanylyltransferase.